A 147-amino-acid chain; its full sequence is MFNMNINSPVRFVKETNRAKSPTRQSPYAAGYDLYSAYDYTIPPGERQLIKTDISMSMPKFCYGRIAPRSGLSLKGIDIGGGVIDEDYRGNIGVILINNGKCTFNVNTGDRIAQLIYQRIYYPELEEVQSLDSTDRGDQGFGSTGLR.

Arg-24 provides a ligand contact to Mg(2+). Residues 68–70 (PRS), 82–85 (GVID), Tyr-88, Gly-93, Ile-95, and Arg-111 each bind dUTP.

This sequence belongs to the dUTPase family. The cofactor is Mg(2+).

It catalyses the reaction dUTP + H2O = dUMP + diphosphate + H(+). This enzyme is involved in nucleotide metabolism: it produces dUMP, the immediate precursor of thymidine nucleotides and it decreases the intracellular concentration of dUTP so that uracil cannot be incorporated into DNA. This chain is Deoxyuridine 5'-triphosphate nucleotidohydrolase (OPG046), found in Oryctolagus cuniculus (Rabbit).